Reading from the N-terminus, the 157-residue chain is Stalk-specific protein B (157 aa).

The first 19 residues, 1–19 (MRSILILLSLLLTIAFASA), serve as a signal peptide directing secretion.

It is found in the secreted. In Dictyostelium discoideum (Social amoeba), this protein is Stalk-specific protein B (staB).